The primary structure comprises 94 residues: Putative regulatory protein Tmel_0100 (94 aa).

This sequence belongs to the RemA family.

This chain is Putative regulatory protein Tmel_0100, found in Thermosipho melanesiensis (strain DSM 12029 / CIP 104789 / BI429).